We begin with the raw amino-acid sequence, 527 residues long: Probable serine/threonine-protein kinase DDB_G0271538 (527 aa).

Residues Met-1 to Ile-10 show a composition bias toward basic and acidic residues. The tract at residues Met-1–Asp-24 is disordered. The 262-residue stretch at Leu-33–Leu-294 folds into the Protein kinase domain. ATP contacts are provided by residues Ile-39–Val-47 and Lys-60. Catalysis depends on Asp-156, which acts as the Proton acceptor. 3 disordered regions span residues Val-304–Ser-375, Phe-422–Pro-452, and Thr-485–Leu-527. The segment covering Asp-313–Asp-324 has biased composition (acidic residues). Residues Asp-325–Asn-359 are compositionally biased toward low complexity. Positions Val-440–Pro-452 are enriched in acidic residues. Over residues Pro-512–Leu-527 the composition is skewed to basic residues.

This sequence belongs to the protein kinase superfamily. TKL Ser/Thr protein kinase family.

It carries out the reaction L-seryl-[protein] + ATP = O-phospho-L-seryl-[protein] + ADP + H(+). It catalyses the reaction L-threonyl-[protein] + ATP = O-phospho-L-threonyl-[protein] + ADP + H(+). This chain is Probable serine/threonine-protein kinase DDB_G0271538, found in Dictyostelium discoideum (Social amoeba).